Reading from the N-terminus, the 345-residue chain is Probable deoxyhypusine synthase 2 (345 aa).

The active-site Nucleophile is K292.

This sequence belongs to the deoxyhypusine synthase family. NAD(+) is required as a cofactor.

It carries out the reaction [eIF5A protein]-L-lysine + spermidine = [eIF5A protein]-deoxyhypusine + propane-1,3-diamine. It functions in the pathway protein modification; eIF5A hypusination. Catalyzes the NAD-dependent oxidative cleavage of spermidine and the subsequent transfer of the butylamine moiety of spermidine to the epsilon-amino group of a specific lysine residue of the eIF-5A precursor protein to form the intermediate deoxyhypusine residue. The chain is Probable deoxyhypusine synthase 2 (dys2) from Methanosarcina acetivorans (strain ATCC 35395 / DSM 2834 / JCM 12185 / C2A).